We begin with the raw amino-acid sequence, 505 residues long: Trans-cinnamate 4-monooxygenase (505 aa).

The chain crosses the membrane as a helical span at residues 3-23; sequence LLLLEKTLLGLFIAAITAIAI. (E)-cinnamate contacts are provided by residues 213-218 and alanine 306; that span reads RSRLAQ. Cysteine 447 provides a ligand contact to heme.

Belongs to the cytochrome P450 family. The cofactor is heme.

The protein localises to the membrane. It catalyses the reaction (E)-cinnamate + reduced [NADPH--hemoprotein reductase] + O2 = (E)-4-coumarate + oxidized [NADPH--hemoprotein reductase] + H2O + H(+). It functions in the pathway phenylpropanoid metabolism; trans-4-coumarate biosynthesis; trans-4-coumarate from trans-cinnamate: step 1/1. Catalyzes the first oxidative step of the phenylpropanoid pathway in higher plants by transforming trans-cinnamate into p-coumarate. The compounds formed by this pathway are essential components for lignification, pollination, and defense against ultraviolet light, predators and pathogens. In Glycyrrhiza echinata (Licorice), this protein is Trans-cinnamate 4-monooxygenase (CYP73A14).